The sequence spans 521 residues: Tigger transposable element-derived protein 6 (521 aa).

An HTH psq-type domain is found at 3–54; the sequence is NKGNKKRRQFSLEEKMKVVGAVDSGKRKGDVAKEFGITPSTLSTFLKDRTKF. 2 consecutive DNA-binding regions (H-T-H motif) follow at residues 30 to 50 and 99 to 130; these read KGDVAKEFGITPSTLSTFLKD and SVIRKKALNLANMLGYDNFQASVGWLNRFRDR. The region spanning 66-137 is the HTH CENPB-type domain; the sequence is QRKRMRSALY…RDRHGIALKA (72 aa). The 203-residue stretch at 170–372 folds into the DDE-1 domain; it reads YSPDDIFNAD…VKPSTVVKCW (203 aa).

Belongs to the tigger transposable element derived protein family.

The protein resides in the nucleus. This chain is Tigger transposable element-derived protein 6 (TIGD6), found in Homo sapiens (Human).